Consider the following 398-residue polypeptide: 1-deoxy-D-xylulose 5-phosphate reductoisomerase (398 aa).

Residues Thr-11, Gly-12, Ser-13, Ile-14, Arg-38, Asn-39, and Asn-125 each coordinate NADPH. Lys-126 provides a ligand contact to 1-deoxy-D-xylulose 5-phosphate. Glu-127 contributes to the NADPH binding site. Residue Asp-151 participates in Mn(2+) binding. Residues Ser-152, Glu-153, Ser-179, and His-202 each contribute to the 1-deoxy-D-xylulose 5-phosphate site. Residue Glu-153 coordinates Mn(2+). Gly-208 contributes to the NADPH binding site. 1-deoxy-D-xylulose 5-phosphate is bound by residues Ser-215, Asn-220, Lys-221, and Glu-224. Residue Glu-224 coordinates Mn(2+).

It belongs to the DXR family. Requires Mg(2+) as cofactor. Mn(2+) serves as cofactor.

The catalysed reaction is 2-C-methyl-D-erythritol 4-phosphate + NADP(+) = 1-deoxy-D-xylulose 5-phosphate + NADPH + H(+). Its pathway is isoprenoid biosynthesis; isopentenyl diphosphate biosynthesis via DXP pathway; isopentenyl diphosphate from 1-deoxy-D-xylulose 5-phosphate: step 1/6. Functionally, catalyzes the NADPH-dependent rearrangement and reduction of 1-deoxy-D-xylulose-5-phosphate (DXP) to 2-C-methyl-D-erythritol 4-phosphate (MEP). The protein is 1-deoxy-D-xylulose 5-phosphate reductoisomerase of Burkholderia cenocepacia (strain HI2424).